A 226-amino-acid polypeptide reads, in one-letter code: MSRAQALPDPAAVGYPSFKLILVGDGGTGKTTFVKRHITGEFEKRYEPTIGVEVRPLDFHTSRGKVRFCCWDTAGQEKFGGLRDGYYIHGHCAIIMFDVTSRLTYKNVPTWHKDICRVCDNIPIVLCGNKVDMKNRQVKAKMVTFHRKKNLQYYEISAKSNYNFEKPFLYLARKLTGDMNLRFVEELALLPADVTIDLIAQQKIETEIAAAAAMPLPDEDEDGLMD.

A Small GTPase Ran-type domain is found at 14–178 (GYPSFKLILV…LYLARKLTGD (165 aa)). 25–32 (DGGTGKTT) lines the GTP pocket. The segment at 44-52 (KRYEPTIGV) is switch-I. GTP contacts are provided by residues glycine 75, 129-132 (NKVD), and 157-159 (SAK). The segment at 75–91 (GQEKFGGLRDGYYIHGH) is switch-II.

The protein belongs to the small GTPase superfamily. Ran family. In terms of assembly, found in a nuclear export complex with RanGTP, exportin and pre-miRNA.

It is found in the nucleus. GTP-binding protein involved in nucleocytoplasmic transport. Required for the import of protein into the nucleus and also for RNA export. Involved in chromatin condensation and control of cell cycle. The protein is GTP-binding nuclear protein Ran-3 (RAN3) of Oryza sativa subsp. indica (Rice).